A 277-amino-acid polypeptide reads, in one-letter code: Phosphonates import ATP-binding protein PhnC (277 aa).

The ABC transporter domain occupies 3–251; it reads IKLDKVSARH…RLQALYAQHL (249 aa). Residue 40–47 participates in ATP binding; sequence GPSGAGKT.

The protein belongs to the ABC transporter superfamily. Phosphonates importer (TC 3.A.1.9.1) family. In terms of assembly, the complex is composed of two ATP-binding proteins (PhnC), two transmembrane proteins (PhnE) and a solute-binding protein (PhnD).

It is found in the cell inner membrane. It catalyses the reaction phosphonate(out) + ATP + H2O = phosphonate(in) + ADP + phosphate + H(+). Its function is as follows. Part of the ABC transporter complex PhnCDE involved in phosphonates import. Responsible for energy coupling to the transport system. In Polaromonas sp. (strain JS666 / ATCC BAA-500), this protein is Phosphonates import ATP-binding protein PhnC.